The primary structure comprises 264 residues: Taurine import ATP-binding protein TauB (264 aa).

Residues 4 to 233 (LQLERISAQY…RYAAGESARA (230 aa)) form the ABC transporter domain. 38 to 45 (GPSGSGKT) provides a ligand contact to ATP.

Belongs to the ABC transporter superfamily. Taurine importer (TC 3.A.1.17.1) family. The complex is composed of two ATP-binding proteins (TauB), two transmembrane proteins (TauC) and a solute-binding protein (TauA).

The protein localises to the cell inner membrane. It carries out the reaction taurine(out) + ATP + H2O = taurine(in) + ADP + phosphate + H(+). Part of the ABC transporter complex TauABC involved in taurine import. Responsible for energy coupling to the transport system. This chain is Taurine import ATP-binding protein TauB, found in Pseudomonas fluorescens (strain ATCC BAA-477 / NRRL B-23932 / Pf-5).